Consider the following 562-residue polypeptide: Nucleoprotein (562 aa).

Residues 54–237 form a binding site for the cap structure m7GTP region; it reads LRKTKRTDGD…ITKDESAINI (184 aa). Mn(2+)-binding residues include aspartate 381 and glutamate 383. Zn(2+) contacts are provided by glutamate 391, cysteine 498, histidine 501, and cysteine 523. Aspartate 527 contributes to the Mn(2+) binding site.

It belongs to the arenaviridae nucleocapsid protein family. Homomultimerizes to form the nucleocapsid. Binds to viral genomic RNA. Interacts with glycoprotein G2. Interacts with protein Z; this interaction probably directs the encapsidated genome to budding sites. Interacts with protein L; this interaction does not interfere with Z-L interaction. Interacts with host IKBKE (via Protein kinase domain); the interaction inhibits IKBKE kinase activity.

The protein resides in the virion. The protein localises to the host cytoplasm. Encapsidates the genome, protecting it from nucleases. The encapsidated genomic RNA is termed the nucleocapsid (NC). Serves as template for viral transcription and replication. The increased presence of protein N in host cell does not seem to trigger the switch from transcription to replication as observed in other negative strain RNA viruses. Through the interaction with host IKBKE, strongly inhibits the phosphorylation and nuclear translocation of host IRF3, a protein involved in interferon activation pathway, leading to the inhibition of interferon-beta and IRF3-dependent promoters activation. Also encodes a functional 3'-5' exoribonuclease that degrades preferentially dsRNA substrates and thereby participates in the suppression of interferon induction. This chain is Nucleoprotein, found in Homo sapiens (Human).